The following is a 352-amino-acid chain: DNA polymerase IV (352 aa).

The UmuC domain occupies 4 to 185; that stretch reads IIHVDMDCFF…LPLSKIPGVG (182 aa). Asp-8 and Asp-103 together coordinate Mg(2+). Glu-104 is an active-site residue.

It belongs to the DNA polymerase type-Y family. Monomer. The cofactor is Mg(2+).

Its subcellular location is the cytoplasm. The enzyme catalyses DNA(n) + a 2'-deoxyribonucleoside 5'-triphosphate = DNA(n+1) + diphosphate. Its function is as follows. Poorly processive, error-prone DNA polymerase involved in untargeted mutagenesis. Copies undamaged DNA at stalled replication forks, which arise in vivo from mismatched or misaligned primer ends. These misaligned primers can be extended by PolIV. Exhibits no 3'-5' exonuclease (proofreading) activity. May be involved in translesional synthesis, in conjunction with the beta clamp from PolIII. The sequence is that of DNA polymerase IV from Yersinia pseudotuberculosis serotype O:1b (strain IP 31758).